A 434-amino-acid chain; its full sequence is APETALA2-like protein 2 (434 aa).

The segment at 1 to 116 (MLLDLNVESP…KTRRGPRSRS (116 aa)) is disordered. Positions 12 to 23 (RSGTSSSSVLNS) are enriched in low complexity. The span at 25–38 (DAGGGGGGGGGGGL) shows a compositional bias: gly residues. A compositionally biased stretch (pro residues) spans 72–87 (LPPPPPAAPSPAPAWQ). A compositionally biased stretch (basic residues) spans 104 to 113 (VAKKTRRGPR). The Nuclear localization signal motif lies at 106-115 (KKTRRGPRSR). DNA-binding regions (AP2/ERF) lie at residues 118–174 (QYRG…INFN) and 210–267 (KFRG…TNFE). Residues 291 to 295 (LDLRI) carry the EAR motif.

It belongs to the AP2/ERF transcription factor family. AP2 subfamily. May form homodimer. Interacts with TPR2/ASP1.

Its subcellular location is the nucleus. In terms of biological role, probable transcription factor. Involved in spikelet transition. Together with SNB, controls synergistically inflorescence architecture and floral meristem establishment via the regulation of spatio-temporal expression of B- and E-function floral organ identity genes in the lodicules and of spikelet meristem genes. Prevents lemma and palea elongation as well as grain growth. In Oryza sativa subsp. indica (Rice), this protein is APETALA2-like protein 2.